The primary structure comprises 94 residues: CRISPR-associated endoribonuclease Cas2 1 (94 aa).

Asp8 contributes to the Mg(2+) binding site.

It belongs to the CRISPR-associated endoribonuclease Cas2 protein family. In terms of assembly, homodimer, forms a heterotetramer with a Cas1 homodimer. Requires Mg(2+) as cofactor.

Its function is as follows. CRISPR (clustered regularly interspaced short palindromic repeat), is an adaptive immune system that provides protection against mobile genetic elements (viruses, transposable elements and conjugative plasmids). CRISPR clusters contain sequences complementary to antecedent mobile elements and target invading nucleic acids. CRISPR clusters are transcribed and processed into CRISPR RNA (crRNA). Involved in the integration of spacer DNA into the CRISPR cassette. Functions as a ssRNA-specific endoribonuclease. The polypeptide is CRISPR-associated endoribonuclease Cas2 1 (cas21) (Archaeoglobus fulgidus (strain ATCC 49558 / DSM 4304 / JCM 9628 / NBRC 100126 / VC-16)).